Consider the following 602-residue polypeptide: Elongation factor 4 (602 aa).

A tr-type G domain is found at 8-190 (DLIRNFSIVA…AIVHRLPPPK (183 aa)). GTP contacts are provided by residues 20 to 25 (DHGKST) and 137 to 140 (NKID).

The protein belongs to the TRAFAC class translation factor GTPase superfamily. Classic translation factor GTPase family. LepA subfamily.

It localises to the cell inner membrane. The catalysed reaction is GTP + H2O = GDP + phosphate + H(+). In terms of biological role, required for accurate and efficient protein synthesis under certain stress conditions. May act as a fidelity factor of the translation reaction, by catalyzing a one-codon backward translocation of tRNAs on improperly translocated ribosomes. Back-translocation proceeds from a post-translocation (POST) complex to a pre-translocation (PRE) complex, thus giving elongation factor G a second chance to translocate the tRNAs correctly. Binds to ribosomes in a GTP-dependent manner. The sequence is that of Elongation factor 4 from Cereibacter sphaeroides (strain ATCC 17023 / DSM 158 / JCM 6121 / CCUG 31486 / LMG 2827 / NBRC 12203 / NCIMB 8253 / ATH 2.4.1.) (Rhodobacter sphaeroides).